Consider the following 337-residue polypeptide: Ornithine carbamoyltransferase, catabolic (337 aa).

Residues 57–60 (STRT), glutamine 84, arginine 108, and 135–138 (HPTQ) contribute to the carbamoyl phosphate site. Residues asparagine 167, aspartate 231, and 235–236 (SM) each bind L-ornithine. Carbamoyl phosphate-binding positions include 272–273 (CL) and arginine 317.

The protein belongs to the aspartate/ornithine carbamoyltransferase superfamily. OTCase family.

Its subcellular location is the cytoplasm. It catalyses the reaction carbamoyl phosphate + L-ornithine = L-citrulline + phosphate + H(+). It participates in amino-acid degradation; L-arginine degradation via ADI pathway; carbamoyl phosphate from L-arginine: step 2/2. Its function is as follows. Reversibly catalyzes the transfer of the carbamoyl group from carbamoyl phosphate (CP) to the N(epsilon) atom of ornithine (ORN) to produce L-citrulline. The protein is Ornithine carbamoyltransferase, catabolic (arcB) of Streptococcus pyogenes serotype M1.